The sequence spans 561 residues: Carboxylesterase 4A (561 aa).

A signal peptide spans 1 to 20; the sequence is MRWILCWSLTLCLMAQTALG. Residues cysteine 88 and cysteine 116 are joined by a disulfide bond. N-linked (GlcNAc...) asparagine glycosylation is present at asparagine 214. Catalysis depends on serine 221, which acts as the Acyl-ester intermediate. The cysteines at positions 273 and 284 are disulfide-linked. A glycan (N-linked (GlcNAc...) asparagine) is linked at asparagine 276. The active-site Charge relay system is glutamate 353. N-linked (GlcNAc...) asparagine glycosylation occurs at asparagine 388. Catalysis depends on histidine 467, which acts as the Charge relay system.

Belongs to the type-B carboxylesterase/lipase family.

The protein localises to the secreted. Its function is as follows. Probable carboxylesterase. This Homo sapiens (Human) protein is Carboxylesterase 4A (CES4A).